The primary structure comprises 206 residues: Xanthine phosphoribosyltransferase (206 aa).

The xanthine site is built by leucine 28 and asparagine 35. 136–140 (ANGQA) is a 5-phospho-alpha-D-ribose 1-diphosphate binding site. Position 164 (lysine 164) interacts with xanthine.

The protein belongs to the purine/pyrimidine phosphoribosyltransferase family. Xpt subfamily. Homodimer.

The protein resides in the cytoplasm. It catalyses the reaction XMP + diphosphate = xanthine + 5-phospho-alpha-D-ribose 1-diphosphate. It participates in purine metabolism; XMP biosynthesis via salvage pathway; XMP from xanthine: step 1/1. Converts the preformed base xanthine, a product of nucleic acid breakdown, to xanthosine 5'-monophosphate (XMP), so it can be reused for RNA or DNA synthesis. The chain is Xanthine phosphoribosyltransferase from Oenococcus oeni (strain ATCC BAA-331 / PSU-1).